Here is a 162-residue protein sequence, read N- to C-terminus: Phosphopantetheine adenylyltransferase (162 aa).

Ser11 provides a ligand contact to substrate. Residues 11–12 (SF) and His19 contribute to the ATP site. Substrate-binding residues include Lys43, Val76, and Arg90. ATP contacts are provided by residues 91–93 (GLR), Glu101, and 126–132 (HLYISSS).

It belongs to the bacterial CoaD family. In terms of assembly, homohexamer. Mg(2+) serves as cofactor.

Its subcellular location is the cytoplasm. The enzyme catalyses (R)-4'-phosphopantetheine + ATP + H(+) = 3'-dephospho-CoA + diphosphate. It functions in the pathway cofactor biosynthesis; coenzyme A biosynthesis; CoA from (R)-pantothenate: step 4/5. Its function is as follows. Reversibly transfers an adenylyl group from ATP to 4'-phosphopantetheine, yielding dephospho-CoA (dPCoA) and pyrophosphate. This chain is Phosphopantetheine adenylyltransferase, found in Streptococcus pneumoniae (strain ATCC 700669 / Spain 23F-1).